Reading from the N-terminus, the 169-residue chain is Peptide deformylase (169 aa).

2 residues coordinate Fe cation: C91 and H133. E134 is a catalytic residue. Position 137 (H137) interacts with Fe cation.

The protein belongs to the polypeptide deformylase family. Requires Fe(2+) as cofactor.

It catalyses the reaction N-terminal N-formyl-L-methionyl-[peptide] + H2O = N-terminal L-methionyl-[peptide] + formate. Removes the formyl group from the N-terminal Met of newly synthesized proteins. Requires at least a dipeptide for an efficient rate of reaction. N-terminal L-methionine is a prerequisite for activity but the enzyme has broad specificity at other positions. The chain is Peptide deformylase from Haemophilus influenzae (strain 86-028NP).